The sequence spans 363 residues: Chorismate synthase (363 aa).

R47 is an NADP(+) binding site. Residues 124–126, G286, 301–305, and R327 contribute to the FMN site; these read RAS and KPTAT.

This sequence belongs to the chorismate synthase family. Homotetramer. It depends on FMNH2 as a cofactor.

The enzyme catalyses 5-O-(1-carboxyvinyl)-3-phosphoshikimate = chorismate + phosphate. It functions in the pathway metabolic intermediate biosynthesis; chorismate biosynthesis; chorismate from D-erythrose 4-phosphate and phosphoenolpyruvate: step 7/7. In terms of biological role, catalyzes the anti-1,4-elimination of the C-3 phosphate and the C-6 proR hydrogen from 5-enolpyruvylshikimate-3-phosphate (EPSP) to yield chorismate, which is the branch point compound that serves as the starting substrate for the three terminal pathways of aromatic amino acid biosynthesis. This reaction introduces a second double bond into the aromatic ring system. The polypeptide is Chorismate synthase (Prochlorococcus marinus (strain MIT 9211)).